Reading from the N-terminus, the 486-residue chain is MTTFYTVMSWLLVFGYWLLIAGVTLRILMKRRAVPSAMAWLLIIYILPLVGIIAYLSLGELHLGKRRAERARTMWPSTARWLNDLKSSHHIFAKENSDVAQALFQLCEKRQGIAGVKGNQLQLLTSTDETLSTLVRDIELARHNIEMVFYIWQPGGHADDVAEALMAAARRGVHCRLLLDSAGSVTFFRSPWPAMMRNAGVDVVEALRVSLLRVFLRRMDLRQHRKVVLIDNYIAYTGSMNLVDPRFFKQNAGVGQWVDLMARMEGPVATTMGIIYSCDWEIETGRRILPPPPDDNVMPFEQESGHTIQVIASGPGFPEDMIHQALLTAVYSAREQLIMTTPYLVPSDDLLHAICTAAYRGVEVSIIVPRHIDSMLVRWASRAFFGELLAAGVKIYQFEGGLLHSKSILVDGQLSLVGTVNLDMRSLWLNFEITLVIDDDGFGSDLARVQEDYIARSRLVDAKRWAHRAYWQRIVERLFYFFSPLL.

The next 2 helical transmembrane spans lie at 3–23 (TFYTVMSWLLVFGYWLLIAGV) and 38–58 (MAWLLIIYILPLVGIIAYLSL). PLD phosphodiesterase domains follow at residues 219–246 (MDLRQHRKVVLIDNYIAYTGSMNLVDPR) and 399–426 (EGGLLHSKSILVDGQLSLVGTVNLDMRS). Catalysis depends on residues His-224, Lys-226, Asp-231, His-404, Lys-406, and Asp-411.

The protein belongs to the phospholipase D family. Cardiolipin synthase subfamily. ClsA sub-subfamily.

Its subcellular location is the cell inner membrane. It carries out the reaction 2 a 1,2-diacyl-sn-glycero-3-phospho-(1'-sn-glycerol) = a cardiolipin + glycerol. Its function is as follows. Catalyzes the reversible phosphatidyl group transfer from one phosphatidylglycerol molecule to another to form cardiolipin (CL) (diphosphatidylglycerol) and glycerol. The protein is Cardiolipin synthase A of Erwinia tasmaniensis (strain DSM 17950 / CFBP 7177 / CIP 109463 / NCPPB 4357 / Et1/99).